Reading from the N-terminus, the 185-residue chain is Ribosome-recycling factor (185 aa).

This sequence belongs to the RRF family.

It is found in the cytoplasm. Its function is as follows. Responsible for the release of ribosomes from messenger RNA at the termination of protein biosynthesis. May increase the efficiency of translation by recycling ribosomes from one round of translation to another. The chain is Ribosome-recycling factor from Dehalococcoides mccartyi (strain CBDB1).